A 312-amino-acid chain; its full sequence is Malate dehydrogenase (312 aa).

NAD(+)-binding positions include 7–13 and D34; that span reads GAAGGIG. Substrate contacts are provided by R81 and R87. NAD(+)-binding positions include N94 and 117–119; that span reads ITN. Substrate is bound by residues N119 and R153. The active-site Proton acceptor is H177. M227 is an NAD(+) binding site.

The protein belongs to the LDH/MDH superfamily. MDH type 1 family. In terms of assembly, homodimer.

The catalysed reaction is (S)-malate + NAD(+) = oxaloacetate + NADH + H(+). In terms of biological role, catalyzes the reversible oxidation of malate to oxaloacetate. The polypeptide is Malate dehydrogenase (Escherichia coli O17:K52:H18 (strain UMN026 / ExPEC)).